Consider the following 113-residue polypeptide: Protein FMC1 homolog (113 aa).

The disordered stretch occupies residues 94 to 113; it reads SAGLVGLKLPHQPGGKGWEP.

Belongs to the FMC1 family. Interacts with ATPAF2.

It is found in the mitochondrion. Functionally, plays a role in the assembly/stability of the mitochondrial membrane ATP synthase (F(1)F(0) ATP synthase or Complex V). The polypeptide is Protein FMC1 homolog (Homo sapiens (Human)).